The chain runs to 751 residues: Dachshund homolog 1 (751 aa).

Residues M1–N178 form a disordered region. Low complexity-rich tracts occupy residues I20–T53 and A61–S74. 2 stretches are compositionally biased toward gly residues: residues P75 to S97 and S107 to A119. Residues S120–S156 show a composition bias toward low complexity. Over residues S167–N178 the composition is skewed to polar residues. The DACHbox-N stretch occupies residues K182–L268. An interaction with SIX6 and HDAC3 region spans residues K182–K377. Disordered regions lie at residues T273 to S295, S351 to A393, S467 to V525, and M537 to D556. Composition is skewed to polar residues over residues R285–N294 and S351–G369. At S484 the chain carries Phosphoserine. The segment covering S499–E517 has biased composition (low complexity). The tract at residues S609–L689 is DACHbox-C. The segment at G620–A699 is interaction with SIN3A. Residues K623–S711 are a coiled coil.

This sequence belongs to the DACH/dachshund family. In terms of assembly, interacts with SIX1, SIX6 and EYA3. Interacts with NCOR1 and HDAC3 through its N-terminus. Interacts with SIN3A through its C-terminus. Interacts with SMAD3 and SMAD4. Expressed at higher levels in adult kidney and lung, and at lower levels in brain and testis. Expressed in embryonal kidneys, eyes, cochleae and limb buds.

The protein resides in the nucleus. In terms of biological role, transcription factor that is involved in regulation of organogenesis. Seems to be a regulator of SIX1, SIX6 and probably SIX5. Corepression of precursor cell proliferation in myoblasts by SIX1 is switched to coactivation through recruitment of EYA3 to the SIX1-DACH1 complex. Transcriptional activation also seems to involve association of CREBBP. Seems to act as a corepressor of SIX6 in regulating proliferation by directly repressing cyclin-dependent kinase inhibitors, including the p27Kip1 promoter. Inhibits TGF-beta signaling through interaction with SMAD4 and NCOR1. Binds to chromatin DNA via its DACHbox-N domain. This chain is Dachshund homolog 1 (Dach1), found in Mus musculus (Mouse).